Reading from the N-terminus, the 452-residue chain is Phosphoglucosamine mutase (452 aa).

The active-site Phosphoserine intermediate is serine 104. Residues serine 104, aspartate 245, aspartate 247, and aspartate 249 each coordinate Mg(2+). Serine 104 carries the phosphoserine modification.

It belongs to the phosphohexose mutase family. The cofactor is Mg(2+). In terms of processing, activated by phosphorylation.

It catalyses the reaction alpha-D-glucosamine 1-phosphate = D-glucosamine 6-phosphate. Catalyzes the conversion of glucosamine-6-phosphate to glucosamine-1-phosphate. This Gluconacetobacter diazotrophicus (strain ATCC 49037 / DSM 5601 / CCUG 37298 / CIP 103539 / LMG 7603 / PAl5) protein is Phosphoglucosamine mutase.